We begin with the raw amino-acid sequence, 74 residues long: VICYRKYTNNVKTCPDGENVCYTKMWCDGFCTSRGKVVELGCAATCPIRKPGNEVKCCSTNKCNHPPKRKKRRP.

Disulfide bonds link cysteine 3-cysteine 21, cysteine 14-cysteine 42, cysteine 27-cysteine 31, cysteine 46-cysteine 57, and cysteine 58-cysteine 63.

The protein belongs to the three-finger toxin family. Long-chain subfamily. Type II alpha-neurotoxin sub-subfamily. As to expression, expressed by the venom gland.

Its subcellular location is the secreted. In terms of biological role, binds with high affinity to muscular (alpha-1/CHRNA1) and neuronal (alpha-7/CHRNA7) nicotinic acetylcholine receptor (nAChR) and inhibits acetylcholine from binding to the receptor, thereby impairing neuromuscular and neuronal transmission. This chain is Alpha-elapitoxin-Aa2d, found in Acanthophis antarcticus (Common death adder).